The sequence spans 570 residues: Double-stranded RNA-binding protein Staufen homolog 2 (570 aa).

The 68-residue stretch at 8–75 (TAMCLVNELA…ANKALTESTL (68 aa)) folds into the DRBM 1 domain. Disordered regions lie at residues 71 to 94 (TEST…PGSI) and 181 to 203 (NEPI…DDKD). Polar residues predominate over residues 83–94 (PKSNVNNNPGSI). Residues 95 to 181 (TPTVELNGLA…AMKALQALQN (87 aa)) enclose the DRBM 2 domain. Phosphoserine is present on Ser-188. The segment covering 194 to 203 (SGKDVDDDKD) has biased composition (basic and acidic residues). 2 DRBM domains span residues 207 to 274 (SEIS…ELKK) and 307 to 375 (NPIS…QLGY). 2 short sequence motifs (nuclear localization signal) span residues 273-291 (KKLP…FKKR) and 373-412 (LGYK…PKGI). The tract at residues 381–570 (LQDQLEKTGE…QDCKKSNSAV (190 aa)) is required for dendritic transport. The segment at 387–409 (KTGENKGWSGPKPGFPEPTNNTP) is disordered. At Ser-395 the chain carries Phosphoserine. Thr-405 is modified (phosphothreonine). Residues Ser-416, Ser-426, Ser-440, Ser-455, and Ser-492 each carry the phosphoserine modification. The tract at residues 528-570 (DGAMNIEKGSLEKQAKHLREKADNNQAPPGSIAQDCKKSNSAV) is disordered. Basic and acidic residues predominate over residues 536–550 (GSLEKQAKHLREKAD).

In terms of assembly, interacts with the exportin XPO5. This requires RNA and RAN bound to GTP. Interacts with microtubules. Isoform 2 and isoform 3 may also interact with ribosomes, and this association is independent of translation. Identified in a mRNP complex, at least composed of DHX9, DDX3X, ELAVL1, HNRNPU, IGF2BP1, ILF3, PABPC1, PCBP2, PTBP2, STAU1, STAU2, SYNCRIP and YBX1. Interacts with TRIM71 (via NHL repeats) in an RNA-dependent manner.

It localises to the cytoplasm. The protein resides in the nucleus. The protein localises to the nucleolus. It is found in the endoplasmic reticulum. RNA-binding protein required for the microtubule-dependent transport of neuronal RNA from the cell body to the dendrite. As protein synthesis occurs within the dendrite, the localization of specific mRNAs to dendrites may be a prerequisite for neurite outgrowth and plasticity at sites distant from the cell body. This Homo sapiens (Human) protein is Double-stranded RNA-binding protein Staufen homolog 2 (STAU2).